The sequence spans 529 residues: Structure-specific endonuclease subunit SLX1 homolog 1 (529 aa).

One can recognise a GIY-YIG domain in the interval 4-89 (RFHCVYLLTS…PTKSTRLKTQ (86 aa)). The SLX1-type zinc finger occupies 231–364 (CALCSLPLRS…PCQPCPCPLC (134 aa)). Disordered stretches follow at residues 275 to 305 (VTMGQSTRNERSGEYSNKIKDDSNDGTMDAH), 409 to 437 (NSSLTERKSRRKATPALGQKRNRGEYCGD), and 470 to 501 (SVSLPPSRDEGYACDSSRRGVGGSKHTTRMTD). The span at 282-297 (RNERSGEYSNKIKDDS) shows a compositional bias: basic and acidic residues.

The protein belongs to the SLX1 family. As to quaternary structure, forms a heterodimer with a member of the SLX4 family. The cofactor is a divalent metal cation.

The protein resides in the nucleus. In terms of biological role, catalytic subunit of a heterodimeric structure-specific endonuclease that resolves DNA secondary structures generated during DNA repair and recombination. Has endonuclease activity towards branched DNA substrates, introducing single-strand cuts in duplex DNA close to junctions with ss-DNA. This chain is Structure-specific endonuclease subunit SLX1 homolog 1, found in Trypanosoma cruzi (strain CL Brener).